The chain runs to 143 residues: Nucleoside diphosphate kinase (143 aa).

Lys-11, Phe-59, Arg-87, Thr-93, Arg-104, and Asn-114 together coordinate ATP. His-117 (pros-phosphohistidine intermediate) is an active-site residue.

The protein belongs to the NDK family. In terms of assembly, homotetramer. Mg(2+) serves as cofactor.

The protein resides in the cytoplasm. It catalyses the reaction a 2'-deoxyribonucleoside 5'-diphosphate + ATP = a 2'-deoxyribonucleoside 5'-triphosphate + ADP. The catalysed reaction is a ribonucleoside 5'-diphosphate + ATP = a ribonucleoside 5'-triphosphate + ADP. Functionally, major role in the synthesis of nucleoside triphosphates other than ATP. The ATP gamma phosphate is transferred to the NDP beta phosphate via a ping-pong mechanism, using a phosphorylated active-site intermediate. This is Nucleoside diphosphate kinase from Shewanella sp. (strain MR-4).